Consider the following 311-residue polypeptide: Triacylglycerol lipase (311 aa).

An N-terminal signal peptide occupies residues 1–26 (MKKKSLLPLGLAIGLASLAASPLIQA). In terms of domain architecture, AB hydrolase-1 spans 35–280 (PIVLAHGMLG…DNYRMNHLDE (246 aa)). M42 provides a ligand contact to substrate. The active-site Nucleophile is the S108. H109 provides a ligand contact to substrate. C209 and C261 are disulfide-bonded. D235 serves as a coordination point for Ca(2+). Catalysis depends on charge relay system residues D255 and H277. 3 residues coordinate Ca(2+): D279, Q283, and L287.

Belongs to the AB hydrolase superfamily. Pseudomonas lipase family. In terms of assembly, monomer. Ca(2+) serves as cofactor.

The protein localises to the secreted. The catalysed reaction is a triacylglycerol + H2O = a diacylglycerol + a fatty acid + H(+). Its activity is regulated as follows. Na(+) increases lipase activity. Inhibited by diethyl p-nitrophenyl phosphate and 3,4-dichloroisocoumarin (DCI). In terms of biological role, catalyzes the hydrolysis of triacylglycerol. It also exhibits some esterase activity with p-nitrophenyl acetate and Tween 80 as substrates, however the lipase activity is approximately eight times the esterase activity. It shows a marked specificity for the 1,3-oleyl residues of triolein. In Pseudomonas aeruginosa (strain ATCC 15692 / DSM 22644 / CIP 104116 / JCM 14847 / LMG 12228 / 1C / PRS 101 / PAO1), this protein is Triacylglycerol lipase.